A 663-amino-acid polypeptide reads, in one-letter code: COBRA-like protein 9 (663 aa).

Residues 1–23 (MGVLLPIFFGVLLLFTVTPPSMS) form the signal peptide. N-linked (GlcNAc...) asparagine glycosylation is found at Asn63, Asn111, Asn121, Asn169, Asn203, Asn326, Asn355, Asn397, Asn409, Asn429, Asn470, Asn550, and Asn561. The GPI-anchor amidated serine moiety is linked to residue Ser638. Positions 639 to 663 (GGRRNGAITVLSFITFYVAAFMVLL) are cleaved as a propeptide — removed in mature form.

This sequence belongs to the COBRA family. As to expression, expressed only in flowers.

Its subcellular location is the cell membrane. The sequence is that of COBRA-like protein 9 (COBL9) from Arabidopsis thaliana (Mouse-ear cress).